A 168-amino-acid polypeptide reads, in one-letter code: Endoribonuclease YbeY (168 aa).

Residues His-132, His-136, and His-142 each coordinate Zn(2+).

This sequence belongs to the endoribonuclease YbeY family. It depends on Zn(2+) as a cofactor.

The protein localises to the cytoplasm. Single strand-specific metallo-endoribonuclease involved in late-stage 70S ribosome quality control and in maturation of the 3' terminus of the 16S rRNA. The protein is Endoribonuclease YbeY of Clostridium perfringens (strain SM101 / Type A).